The sequence spans 333 residues: Glyceraldehyde-3-phosphate dehydrogenase (333 aa).

Residues 11 to 12 (RI), Asp35, and Thr121 contribute to the NAD(+) site. D-glyceraldehyde 3-phosphate is bound by residues 151-153 (SCT) and Thr182. Catalysis depends on Cys152, which acts as the Nucleophile. Residue Asn183 participates in NAD(+) binding. Residues Arg197, 210-211 (TG), and Arg233 contribute to the D-glyceraldehyde 3-phosphate site. Asn315 is an NAD(+) binding site.

Belongs to the glyceraldehyde-3-phosphate dehydrogenase family. In terms of assembly, homotetramer.

It localises to the cytoplasm. The enzyme catalyses D-glyceraldehyde 3-phosphate + phosphate + NAD(+) = (2R)-3-phospho-glyceroyl phosphate + NADH + H(+). Its pathway is carbohydrate degradation; glycolysis; pyruvate from D-glyceraldehyde 3-phosphate: step 1/5. In terms of biological role, catalyzes the oxidative phosphorylation of glyceraldehyde 3-phosphate (G3P) to 1,3-bisphosphoglycerate (BPG) using the cofactor NAD. The first reaction step involves the formation of a hemiacetal intermediate between G3P and a cysteine residue, and this hemiacetal intermediate is then oxidized to a thioester, with concomitant reduction of NAD to NADH. The reduced NADH is then exchanged with the second NAD, and the thioester is attacked by a nucleophilic inorganic phosphate to produce BPG. The polypeptide is Glyceraldehyde-3-phosphate dehydrogenase (gap) (Thermotoga maritima (strain ATCC 43589 / DSM 3109 / JCM 10099 / NBRC 100826 / MSB8)).